A 100-amino-acid chain; its full sequence is UPF0473 protein Lm4b_01511 (100 aa).

This sequence belongs to the UPF0473 family.

This is UPF0473 protein Lm4b_01511 from Listeria monocytogenes serotype 4b (strain CLIP80459).